The following is a 583-amino-acid chain: L-galactono-1,4-lactone dehydrogenase 2, mitochondrial (583 aa).

The transit peptide at M1–P36 directs the protein to the mitochondrion. A propeptide spans A37–K78 (removed in mature form). The chain crosses the membrane as a helical span at residues Y45–Y61. The 172-residue stretch at T95–R266 folds into the FAD-binding PCMH-type domain.

Requires FAD as cofactor.

Its subcellular location is the mitochondrion membrane. It catalyses the reaction L-galactono-1,4-lactone + 4 Fe(III)-[cytochrome c] = L-dehydroascorbate + 4 Fe(II)-[cytochrome c] + 5 H(+). The protein operates within cofactor biosynthesis; L-ascorbate biosynthesis. Involved in the biosynthesis of ascorbic acid. The chain is L-galactono-1,4-lactone dehydrogenase 2, mitochondrial (GLDH2) from Oryza sativa subsp. japonica (Rice).